Reading from the N-terminus, the 1031-residue chain is MTVAEIKKLALNNQVFNEAKALLEKGNVIFPKKFLKRKKIIIEVLDGKVFKVQINLKTAAAHLDCSCSNDKQNCVHIIAALLKYNDLKNQDNKEFDLNKADKLECKEVEILIENVSLAIVNGSWKLKIGFVINIDKVQTNTTALRFYCCDNKDVYFLHTEDEQLFRIALDKFNSVERQTLLIFDQLNKTKQMQYENNSLLFNLDQFLSLVKEVKKPSLFLLNEDKTDNILFLRSQHKINGLSHVCGFLNNKVFDFVSYNEKTKQIVLRLAYLNKFTDFKFPYNINIYKLAFGETLFFHFLIHLKMNGFKNIFFQSDVVIVKESEYLPKMFLTIEFNTQKNKFITDAFFKYKNKNSNTLTTVYPHRYYLAQKTNTSNFNRLLFYEQALQRFYEELFQIDYLRRFENIPIKDKNQIALFKTVFDDYKTIDLAELKLTSNLLNYKQLHFSISDIKALKIEDRQLKIEFKAGGIDLKLIKSVLSNYYKGNAICIGEDGWYDLNDENAKALISFWSQIDLRNATCDANNNLLLAKYHLFEVVDTISKYTDVTNLLDEKTALQLKIASENQFHLSLDNNQINNLRKYQKEGVKWIRALEDNQFGGILADEMGLGKTAQVIFAMLDSYQSTKSLLPSLIIVPASLLLNWKSEFQKFAPHVKIVTANGNFKERSQVYESLKNQILLMSFNVLRSDIKWISQKKFHYVVIDEAQGIKNENSTVTKAAKKIKGNFCLALTGTPIENRLLDLWSCFDFVLPNFLGNKKQFSDQFEKEKNDESFQKLMKKTSPFILRRTKNKVLKELPKKIITDIYVELSEEHQKLYDKQKTDGLKEIKESDAKNALNILSLILKLRHICSLVKDNDVNDFEDNSKANAALNIIYEALENKRKVILFTQFLDVIDCFKQTLKNQKIDHLVFDGRKTVKNRNTIIQKFNSAKEPCVMLASLKAGGVGINLTAAEVVIHFDVWWNSAVENQATDRAHRIGQSKTVQVYRIIAKNTIEERVCQVQNQKQELVKKTLVEDVNFFKSLSHEELLKLFE.

The SWIM-type zinc-finger motif lies at 50 to 85; sequence FKVQINLKTAAAHLDCSCSNDKQNCVHIIAALLKYN. One can recognise a Helicase ATP-binding domain in the interval 590-751; it reads RALEDNQFGG…WSCFDFVLPN (162 aa). 603-610 lines the ATP pocket; it reads DEMGLGKT. A DEAQ box motif is present at residues 702–705; sequence DEAQ. The 155-residue stretch at 868–1022 folds into the Helicase C-terminal domain; that stretch reads ALNIIYEALE…EDVNFFKSLS (155 aa).

This sequence belongs to the SNF2/RAD54 helicase family.

This is an uncharacterized protein from Mycoplasma genitalium (strain ATCC 33530 / DSM 19775 / NCTC 10195 / G37) (Mycoplasmoides genitalium).